The sequence spans 363 residues: MNRSEALFYRYGIRPILFRLGRGDAETAHERTLHILALISRSRLLCKTIGYLTTIRDQRLQRTVCGIPFPNPVGLAAGMDKDGVAIPAWAALGFGFVEVGTVTHHPQPGNPRPRLFRLPEQEALINRMGFNNQGAASLARRLARLQPAPIPVGVSIGKSKITPLEQAIDDYRASFRQLFPYAAYIAINVSSPNTPGLRQLQDADQLRALLAALQHDNAELGRTDQRGPRPLLVKIAPDLSDTAIEEVLTVCADHGVAGIIATNTTISREGLTGVDPRLAAEAGGLSGRPLIARALHVVRLIARLTGNRLPIIGVGGIHTPDDGLRMLEAGASLIQIYTGLVYYGPLLPRRINRAILTHSKVQQ.

Residues 77 to 81 and Thr-101 contribute to the FMN site; that span reads AGMDK. Lys-81 contributes to the substrate binding site. 126–130 is a binding site for substrate; that stretch reads NRMGF. FMN-binding residues include Ser-155 and Asn-188. Asn-188 contributes to the substrate binding site. Ser-191 functions as the Nucleophile in the catalytic mechanism. Asn-193 provides a ligand contact to substrate. Residues Lys-234 and Thr-262 each coordinate FMN. Position 263–264 (263–264) interacts with substrate; it reads NT. FMN is bound by residues Gly-287, Gly-316, and 337-338; that span reads YT.

Belongs to the dihydroorotate dehydrogenase family. Type 2 subfamily. As to quaternary structure, monomer. The cofactor is FMN.

The protein localises to the cell membrane. The enzyme catalyses (S)-dihydroorotate + a quinone = orotate + a quinol. Its pathway is pyrimidine metabolism; UMP biosynthesis via de novo pathway; orotate from (S)-dihydroorotate (quinone route): step 1/1. In terms of biological role, catalyzes the conversion of dihydroorotate to orotate with quinone as electron acceptor. In Chloroflexus aurantiacus (strain ATCC 29366 / DSM 635 / J-10-fl), this protein is Dihydroorotate dehydrogenase (quinone).